The primary structure comprises 247 residues: 2,3-bisphosphoglycerate-dependent phosphoglycerate mutase (247 aa).

Residues Arg8–Asn15, Thr21–Gly22, Arg60, Glu87–Tyr90, Lys98, Arg114–Arg115, and Gly183–Asn184 contribute to the substrate site. The active-site Tele-phosphohistidine intermediate is His9. Residue Glu87 is the Proton donor/acceptor of the active site.

Belongs to the phosphoglycerate mutase family. BPG-dependent PGAM subfamily. In terms of assembly, homodimer.

The enzyme catalyses (2R)-2-phosphoglycerate = (2R)-3-phosphoglycerate. It functions in the pathway carbohydrate degradation; glycolysis; pyruvate from D-glyceraldehyde 3-phosphate: step 3/5. Functionally, catalyzes the interconversion of 2-phosphoglycerate and 3-phosphoglycerate. The protein is 2,3-bisphosphoglycerate-dependent phosphoglycerate mutase of Acidovorax sp. (strain JS42).